A 550-amino-acid chain; its full sequence is MSANCVSAAPTSPKNSDVEEIRKSATYHSSVWGNHFLSYTSDVTEITAAEKEQLEKLKEKVKNLLAQTPDESTGKMELIDAIQRLGVGYHFTTEIQESLRQIHEGQIRNDDDDVRVVALRFRLLRQGGYRAPCDVFEKFMDDGGNFKESLKKDVEGMLSLYEASYYGIDGEEIMDKALEFSSSHLESMLHNISTKTNKSLLRRLQEALDTPISKAAIRLGATKFISTYREDESHNEDILNFAKLDFNILQKMHQEEANYLTRWWEDLDLASKLDFARDRMVESYFWSLGVYFQPQYRTSRIYLTKIISIVAVIDDIYDVYGSFDDLRSFTDVIQSWKISNADELPPYMRICFEALLGIYEDMGDRIGAPYAIDTMKELVDTYMQEAEWCYTEYVPTVDEYMKVALVTGGYLMVATTFLTGINNITKKDFDWIRNRPRLLQVAEVLTRLMDDIAGHGTEKKTTAVSCYMKEYECSEMEASRELSKQVKKAWKDLNDEWMEPRSSSAEIIGCIVNMSRVLHIMYSTGDDGFSDSSTRTTQAVKTLLVDHPMN.

Residues Asp314, Asp318, Asp450, and Glu458 each coordinate Mg(2+). Positions 314–318 match the DDXXD motif motif; it reads DDIYD.

Belongs to the terpene synthase family. Requires Mg(2+) as cofactor. The cofactor is Mn(2+).

It catalyses the reaction (2E,6E)-farnesyl diphosphate = (+)-beta-selinene + diphosphate. It carries out the reaction (2E,6E)-farnesyl diphosphate = alpha-selinene + diphosphate. It participates in secondary metabolite biosynthesis; terpenoid biosynthesis. Its function is as follows. Sesquiterpene synthase that catalyzes the formation of alpha- and beta-selinene from trans,trans-farnesyl diphosphate (FPP). Also produces some nerolidol. This is Selinene synthase (SES) from Ocimum basilicum (Sweet basil).